A 589-amino-acid polypeptide reads, in one-letter code: Arylsulfatase L (589 aa).

Positions 1–31 are cleaved as a signal peptide; the sequence is MLHLHHSCLCFRSWLPAMLAVLLSLAPSASS. Ca(2+) is bound by residues Asp-46 and Asp-47. Asn-58 carries an N-linked (GlcNAc...) asparagine glycan. Residue Cys-86 coordinates Ca(2+). Catalysis depends on Cys-86, which acts as the Nucleophile. 3-oxoalanine (Cys) is present on Cys-86. A glycan (N-linked (GlcNAc...) asparagine) is linked at Asn-125. Position 145 (Lys-145) interacts with substrate. Residue His-147 is part of the active site. An N-linked (GlcNAc...) asparagine glycan is attached at Asn-258. His-301 serves as a coordination point for substrate. Asn-344 is a glycosylation site (N-linked (GlcNAc...) asparagine). Asp-353 and His-354 together coordinate Ca(2+). Lys-378 provides a ligand contact to substrate.

Belongs to the sulfatase family. Requires Ca(2+) as cofactor. N-glycosylated. Post-translationally, the conversion to 3-oxoalanine (also known as C-formylglycine, FGly), of a serine or cysteine residue in prokaryotes and of a cysteine residue in eukaryotes, is critical for catalytic activity. As to expression, expressed in the pancreas, liver and kidney.

Its subcellular location is the golgi apparatus. The protein resides in the golgi stack. It catalyses the reaction an aryl sulfate + H2O = a phenol + sulfate + H(+). With respect to regulation, inhibited by millimolar concentrations of warfarin. Its function is as follows. Exhibits arylsulfatase activity towards the artificial substrate 4-methylumbelliferyl sulfate. May be essential for the correct composition of cartilage and bone matrix during development. Has no activity toward steroid sulfates. The chain is Arylsulfatase L from Homo sapiens (Human).